A 165-amino-acid polypeptide reads, in one-letter code: uncharacterized protein (165 aa).

Positions 28–97 (EASAPSGNPP…QLSQSLEVPT (70 aa)) are disordered. Positions 34–47 (GNPPPPPPPPPPPI) are enriched in pro residues. 2 stretches are compositionally biased toward polar residues: residues 54-66 (KSLN…QLDN) and 73-94 (AQHT…QSLE).

This is an uncharacterized protein from Rickettsia prowazekii (strain Madrid E).